Reading from the N-terminus, the 899-residue chain is Valine--tRNA ligase (899 aa).

The 'HIGH' region motif lies at P60–H70. Residues K539 to S543 carry the 'KMSKS' region motif. K542 contacts ATP. Residues A827–L898 adopt a coiled-coil conformation.

The protein belongs to the class-I aminoacyl-tRNA synthetase family. ValS type 1 subfamily. As to quaternary structure, monomer.

The protein resides in the cytoplasm. The catalysed reaction is tRNA(Val) + L-valine + ATP = L-valyl-tRNA(Val) + AMP + diphosphate. In terms of biological role, catalyzes the attachment of valine to tRNA(Val). As ValRS can inadvertently accommodate and process structurally similar amino acids such as threonine, to avoid such errors, it has a 'posttransfer' editing activity that hydrolyzes mischarged Thr-tRNA(Val) in a tRNA-dependent manner. This Syntrophotalea carbinolica (strain DSM 2380 / NBRC 103641 / GraBd1) (Pelobacter carbinolicus) protein is Valine--tRNA ligase.